A 270-amino-acid chain; its full sequence is 3-phenylpropionate-dihydrodiol/cinnamic acid-dihydrodiol dehydrogenase (270 aa).

An NAD(+)-binding site is contributed by 10-34; it reads FITGGGSGLGLALVERFIEEGAQVA. Residue Ser143 coordinates substrate. Catalysis depends on Tyr156, which acts as the Proton acceptor.

This sequence belongs to the short-chain dehydrogenases/reductases (SDR) family.

It carries out the reaction 3-(cis-5,6-dihydroxycyclohexa-1,3-dien-1-yl)propanoate + NAD(+) = 3-(2,3-dihydroxyphenyl)propanoate + NADH + H(+). The enzyme catalyses (2E)-3-(cis-5,6-dihydroxycyclohexa-1,3-dien-1-yl)prop-2-enoate + NAD(+) = (2E)-3-(2,3-dihydroxyphenyl)prop-2-enoate + NADH + H(+). It functions in the pathway aromatic compound metabolism; 3-phenylpropanoate degradation. Functionally, converts 3-phenylpropionate-dihydrodiol (PP-dihydrodiol) and cinnamic acid-dihydrodiol (CI-dihydrodiol) into 3-(2,3-dihydroxylphenyl)propanoic acid (DHPP) and 2,3-dihydroxicinnamic acid (DHCI), respectively. In Shigella sonnei (strain Ss046), this protein is 3-phenylpropionate-dihydrodiol/cinnamic acid-dihydrodiol dehydrogenase.